The sequence spans 218 residues: 3-dehydroquinate dehydratase (218 aa).

Residues 29–31 (EFR) and Arg-56 contribute to the 3-dehydroquinate site. His-116 acts as the Proton donor/acceptor in catalysis. Lys-142 (schiff-base intermediate with substrate) is an active-site residue. Arg-180, Ser-200, and Gln-204 together coordinate 3-dehydroquinate.

Belongs to the type-I 3-dehydroquinase family. As to quaternary structure, homodimer.

It catalyses the reaction 3-dehydroquinate = 3-dehydroshikimate + H2O. Its pathway is metabolic intermediate biosynthesis; chorismate biosynthesis; chorismate from D-erythrose 4-phosphate and phosphoenolpyruvate: step 3/7. In terms of biological role, involved in the third step of the chorismate pathway, which leads to the biosynthesis of aromatic amino acids. Catalyzes the cis-dehydration of 3-dehydroquinate (DHQ) and introduces the first double bond of the aromatic ring to yield 3-dehydroshikimate. The protein is 3-dehydroquinate dehydratase of Methanococcus maripaludis (strain C5 / ATCC BAA-1333).